A 440-amino-acid polypeptide reads, in one-letter code: D-serine dehydratase (440 aa).

Lys116 is subject to N6-(pyridoxal phosphate)lysine.

This sequence belongs to the serine/threonine dehydratase family. DsdA subfamily. In terms of assembly, monomer. Pyridoxal 5'-phosphate serves as cofactor.

The enzyme catalyses D-serine = pyruvate + NH4(+). In Salmonella enteritidis PT4 (strain P125109), this protein is D-serine dehydratase.